The primary structure comprises 409 residues: Dihydrolipoyllysine-residue succinyltransferase component of 2-oxoglutarate dehydrogenase complex (409 aa).

Residues 2-77 (AIEILVPDLP…VSKQLLGKIS (76 aa)) enclose the Lipoyl-binding domain. Residue Lys43 is modified to N6-lipoyllysine. Residues 83 to 107 (DVSSATLKATNEPTPSDRQNAAIEN) are compositionally biased toward polar residues. The tract at residues 83–114 (DVSSATLKATNEPTPSDRQNAAIENSHNHNAD) is disordered. Residues 114-151 (DQSPVIRRLLAEHDLQADQIQGSGVGGRLTREDIEREI) enclose the Peripheral subunit-binding (PSBD) domain. Active-site residues include His380 and Asp384.

The protein belongs to the 2-oxoacid dehydrogenase family. In terms of assembly, forms a 24-polypeptide structural core with octahedral symmetry. Part of the 2-oxoglutarate dehydrogenase (OGDH) complex composed of E1 (2-oxoglutarate dehydrogenase), E2 (dihydrolipoamide succinyltransferase) and E3 (dihydrolipoamide dehydrogenase); the complex contains multiple copies of the three enzymatic components (E1, E2 and E3). It depends on (R)-lipoate as a cofactor.

The enzyme catalyses N(6)-[(R)-dihydrolipoyl]-L-lysyl-[protein] + succinyl-CoA = N(6)-[(R)-S(8)-succinyldihydrolipoyl]-L-lysyl-[protein] + CoA. Its pathway is amino-acid degradation; L-lysine degradation via saccharopine pathway; glutaryl-CoA from L-lysine: step 6/6. E2 component of the 2-oxoglutarate dehydrogenase (OGDH) complex which catalyzes the second step in the conversion of 2-oxoglutarate to succinyl-CoA and CO(2). The polypeptide is Dihydrolipoyllysine-residue succinyltransferase component of 2-oxoglutarate dehydrogenase complex (sucB) (Haemophilus influenzae (strain ATCC 51907 / DSM 11121 / KW20 / Rd)).